A 353-amino-acid chain; its full sequence is Quinolinate synthase (353 aa).

2 residues coordinate iminosuccinate: His47 and Ser68. Cys113 is a [4Fe-4S] cluster binding site. Iminosuccinate contacts are provided by residues 139-141 and Ser156; that span reads YAN. Residue Cys200 participates in [4Fe-4S] cluster binding. Residues 226–228 and Thr243 each bind iminosuccinate; that span reads HPE. Residue Cys297 participates in [4Fe-4S] cluster binding.

This sequence belongs to the quinolinate synthase family. Type 1 subfamily. It depends on [4Fe-4S] cluster as a cofactor.

Its subcellular location is the cytoplasm. The enzyme catalyses iminosuccinate + dihydroxyacetone phosphate = quinolinate + phosphate + 2 H2O + H(+). It participates in cofactor biosynthesis; NAD(+) biosynthesis; quinolinate from iminoaspartate: step 1/1. Functionally, catalyzes the condensation of iminoaspartate with dihydroxyacetone phosphate to form quinolinate. The polypeptide is Quinolinate synthase (Yersinia pseudotuberculosis serotype O:3 (strain YPIII)).